The following is an 82-amino-acid chain: MCIGVPGQVLAVGEDIHQLAQVEVCGIKRDVNIALICEGNPADLLGQWVLVHVGFAMSIIDEDEAKATLDALRQMDYDITSA.

Belongs to the HupF/HypC family.

It functions in the pathway protein modification; [NiFe] hydrogenase maturation. Functionally, involved in the maturation of [NiFe] hydrogenases. Involved in the biosynthesis of the Fe(CN)(2)CO cofactor. HybG delivers iron-bound CO(2) to HypD where reduction to CO probably occurs. In complex with HypD, accepts the cyanide ligand generated by HypF and HypE, and also coordinates the carbon monoxide ligand. In Escherichia coli O157:H7, this protein is Hydrogenase maturation factor HybG (hybG).